Reading from the N-terminus, the 186-residue chain is GPI-anchored hemophore ARB_02741 (186 aa).

The signal sequence occupies residues 1–18; that stretch reads MKFSQAVIALAAATVVSA. The 90-residue stretch at 19–108 folds into the CFEM domain; sequence QLPDVPQCSL…SSKPSEPSTS (90 aa). Disulfide bonds link cysteine 26/cysteine 67, cysteine 30/cysteine 62, cysteine 40/cysteine 48, and cysteine 50/cysteine 83. Aspartate 45 is a binding site for heme. Positions 89–159 are disordered; it reads PVSIPPVEES…NTGVPTQSTP (71 aa). Over residues 96 to 131 the composition is skewed to low complexity; that stretch reads EESSSKPSEPSTSEAPTASPTESTPAPTTPAPTGTG. The span at 132 to 144 shows a compositional bias: gly residues; that stretch reads SPSGTGAPGGPSG. Over residues 148-159 the composition is skewed to polar residues; the sequence is FTNTGVPTQSTP. Glycine 163 carries GPI-anchor amidated glycine lipidation. A propeptide spans 164-186 (removed in mature form); that stretch reads AASGLSANIGGMGAAILAIAAYL.

It belongs to the RBT5 family. The GPI-anchor is attached to the protein in the endoplasmic reticulum and serves to target the protein to the cell surface. There, the glucosamine-inositol phospholipid moiety is cleaved off and the GPI-modified mannoprotein is covalently attached via its lipidless GPI glycan remnant to the 1,6-beta-glucan of the outer cell wall layer.

It localises to the secreted. It is found in the cell wall. The protein resides in the cell membrane. In terms of biological role, GPI-anchored cell wall protein involved in stabilizing the cell wall. This chain is GPI-anchored hemophore ARB_02741, found in Arthroderma benhamiae (strain ATCC MYA-4681 / CBS 112371) (Trichophyton mentagrophytes).